The primary structure comprises 850 residues: Pentatricopeptide repeat-containing protein At5g16860 (850 aa).

17 PPR repeats span residues 58-88 (TLNL…FPPS), 91-125 (GVYH…SWTP), 126-160 (DNYT…GFIS), 161-191 (NVFV…MSVW), 192-227 (DVVS…GCRP), 228-262 (DNIT…EMIQ), 263-293 (NMFV…MSVK), 294-328 (DVVS…KIKM), 329-363 (DVVT…GIKP), 364-398 (NEVT…PIDL), 406-436 (ENMV…LSPK), 439-473 (DVVT…DCQT), 476-510 (NAFT…QQNA), 512-542 (PLFV…MMAK), 543-577 (NEVT…GFKL), 578-608 (DGVT…MKTV), and 614-644 (GPEH…MPME). The type E motif stretch occupies residues 649–724 (VWVAFLSCCR…RPGCSWVEGI (76 aa)). The segment at 725-755 (KGTTTFFVGDKTHPHAKEIYQVLLDHMQRIK) is type E(+) motif. The tract at residues 756 to 850 (DIGYVPETGF…NGSCSCKGYW (95 aa)) is type DYW motif.

This sequence belongs to the PPR family. PCMP-H subfamily.

The chain is Pentatricopeptide repeat-containing protein At5g16860 (PCMP-H92) from Arabidopsis thaliana (Mouse-ear cress).